The sequence spans 469 residues: Protein POLLENLESS 3-LIKE 1 (469 aa).

The tract at residues 1 to 20 is disordered; sequence MRRRESRGAKGGGFLTPPPS. TPR repeat units lie at residues 88 to 121, 124 to 157, and 184 to 217; these read DSAL…CPFE, DSID…LEQD, and ARIL…EPDN. Positions 139-191 form a coiled coil; the sequence is RITEVAELLEHKLRTLEQDKHYGGRIKIAKRSHEEQNNKTIEQEKARILGNLA. Residues 314 to 338 are compositionally biased toward polar residues; it reads NIHKTNSHASSESVEQNSPGLTTQP. The disordered stretch occupies residues 314–339; it reads NIHKTNSHASSESVEQNSPGLTTQPR.

Belongs to the MS5 protein family. In terms of tissue distribution, expressed in floral and vegetative organs. Also barely detectable in leaves and stems.

Its subcellular location is the nucleus. Probably involved in the regulation of cell division. This is Protein POLLENLESS 3-LIKE 1 from Arabidopsis thaliana (Mouse-ear cress).